We begin with the raw amino-acid sequence, 644 residues long: Protein cueball (644 aa).

The signal sequence occupies residues 1-26; the sequence is MIRIRFGMDVLLVLLLATCLLSPAHG. The Extracellular segment spans residues 27–531; that stretch reads TPLEWDFAVT…VCLTPKVWTS (505 aa). N82 and N108 each carry an N-linked (GlcNAc...) asparagine glycan. LDL-receptor class B repeat units follow at residues 121–166, 167–211, and 212–257; these read MNLF…DVCR, RKLY…DQLS, and DRLF…TNDA. N175, N190, and N196 each carry an N-linked (GlcNAc...) asparagine glycan. Residue N313 is glycosylated (N-linked (GlcNAc...) asparagine). 2 consecutive EGF-like domains span residues 398 to 430 and 433 to 471; these read EIRE…FTGE and EVSV…ARCE. Cystine bridges form between C402/C411, C406/C421, C437/C447, C441/C459, and C461/C470. 2 N-linked (GlcNAc...) asparagine glycosylation sites follow: N473 and N508. Residues 532-552 form a helical membrane-spanning segment; it reads SVIIILVIGIVSSLLLVAVIV. Residues 553–644 are Cytoplasmic-facing; sequence HGIRRLYKPK…LIHNMEDDLY (92 aa).

This sequence belongs to the cueball family.

Its subcellular location is the cell membrane. In terms of biological role, has a role in spermatogenesis and oogenesis. The sequence is that of Protein cueball from Drosophila erecta (Fruit fly).